A 734-amino-acid chain; its full sequence is Sulfate transporter (734 aa).

Residues 1–11 (MSLKNGEQNDL) show a composition bias toward polar residues. Residues 1–38 (MSLKNGEQNDLSPKDSVKGNDQYRSPSGIHVEHEEESR) are disordered. A phosphoserine mark is found at S12 and S16. The next 2 membrane-spanning stretches (helical) occupy residues 113–133 (MMSG…YSLL) and 138–158 (PIYG…LGTS). Residues N194 and N204 are each glycosylated (N-linked (GlcNAc...) asparagine). 8 helical membrane passes run 222–242 (FVAG…VSVY), 247–267 (LLGG…VKYL), 269–289 (GLSL…IHIF), 292–312 (IHKT…VLLP), 379–399 (VDAI…SEMF), 415–435 (AIGF…SAAL), 453–473 (VMTA…FFSL), and 519–539 (LIST…CVIL). Residues 563-714 (AYKNLQAKSG…YSVYEAMTFA (152 aa)) form the STAS domain.

It belongs to the SLC26A/SulP transporter (TC 2.A.53) family. N-glycosylated.

The protein resides in the cell membrane. It is found in the apical cell membrane. It catalyses the reaction oxalate(in) + sulfate(out) = oxalate(out) + sulfate(in). The enzyme catalyses sulfate(out) + 2 chloride(in) = sulfate(in) + 2 chloride(out). It carries out the reaction oxalate(out) + 2 chloride(in) = oxalate(in) + 2 chloride(out). The catalysed reaction is bromide(in) + chloride(out) = bromide(out) + chloride(in). It catalyses the reaction nitrate(in) + chloride(out) = nitrate(out) + chloride(in). The enzyme catalyses iodide(in) + chloride(out) = iodide(out) + chloride(in). Functionally, sulfate transporter which mediates sulfate uptake into chondrocytes in order to maintain adequate sulfation of proteoglycans which is needed for cartilage development. Mediates electroneutral anion exchange of sulfate ions for oxalate ions, sulfate and oxalate ions for chloride and/or hydroxyl ions and chloride ions for bromide, iodide and nitrate ions. The coupling of sulfate transport to both hydroxyl and chloride ions likely serves to ensure transport at both acidic pH when most sulfate uptake is mediated by sulfate-hydroxide exchange and alkaline pH when most sulfate uptake is mediated by sulfate-chloride exchange. Essential for chondrocyte proliferation, differentiation and cell size expansion. In Ovis aries (Sheep), this protein is Sulfate transporter (SLC26A2).